The primary structure comprises 328 residues: MSHVELQPGFDFQQAGKEVLAIERECLAELDQYINQNFTLACEKMFWCKGKVVVMGMGKSGHIGRKMAATFASTGTPSFFVHPGEAAHGDLGMVTPQDVVIAISNSGESSEITALIPVLKRLHVPLICITGRPESSMARAADVHLCVKVAKEACPLGLAPTSSTTATLVMGDALAVALLKARGFTAEDFALSHPGGALGRKLLLRVNDIMHTGDEIPHVKKTASLRDALLEVTRKNLGMTVICDDNMMIEGIFTDGDLRRVFDMGVDVRQLSIADVMTPGGIRVRPGILAVEALNLMQSRHITSVMVADGDHLLGVLHMHDLLRAGVV.

The region spanning 42-184 is the SIS domain; sequence CEKMFWCKGK…AVALLKARGF (143 aa). Residues 75–76, His82, His88, 114–123, 148–150, Thr222, and Asp275 each bind substrate; these read GT, ALIPVLKRLH, and KVA. His82 is a binding site for Zn(2+). The CBS 1 domain occupies 210–268; that stretch reads MHTGDEIPHVKKTASLRDALLEVTRKNLGMTVICDDNMMIEGIFTDGDLRRVFDMGVDV. The region spanning 277-328 is the CBS 2 domain; the sequence is MTPGGIRVRPGILAVEALNLMQSRHITSVMVADGDHLLGVLHMHDLLRAGVV.

Belongs to the SIS family. GutQ/KpsF subfamily. In terms of assembly, homotetramer.

It catalyses the reaction D-arabinose 5-phosphate = D-ribulose 5-phosphate. It functions in the pathway carbohydrate biosynthesis; 3-deoxy-D-manno-octulosonate biosynthesis; 3-deoxy-D-manno-octulosonate from D-ribulose 5-phosphate: step 1/3. The protein operates within bacterial outer membrane biogenesis; lipopolysaccharide biosynthesis. With respect to regulation, completely inhibited by 10 uM of nickel, copper, cadmium and mercury ions. Inhibited by zinc with an IC(50) of 1-3 uM. Metal ion inhibition may be a mechanism to control activity in vivo. In terms of biological role, involved in the biosynthesis of 3-deoxy-D-manno-octulosonate (KDO), a unique 8-carbon sugar component of lipopolysaccharides (LPSs). KdsD is not essential in the KDO biosynthesis and can be substituted by GutQ. Catalyzes the reversible aldol-ketol isomerization between D-ribulose 5-phosphate (Ru5P) and D-arabinose 5-phosphate (A5P). The sequence is that of Arabinose 5-phosphate isomerase KdsD (kdsD) from Escherichia coli (strain K12).